Consider the following 920-residue polypeptide: Vacuolar membrane protease (920 aa).

Over 1–20 the chain is Cytoplasmic; sequence MASSRAQRFNPIAFTPWPVT. The chain crosses the membrane as a helical span at residues 21-41; it reads CITTIVYLALLIPILVINLVV. Residues 42 to 378 lie on the Vacuolar side of the membrane; that stretch reads PSAPETNPKG…AFAVFRLHTL (337 aa). N-linked (GlcNAc...) asparagine glycosylation is found at Asn53, Asn116, and Asn119. Zn(2+) is bound by residues His175 and Asp187. The active-site Proton acceptor is the Glu221. Glu222 lines the Zn(2+) pocket. The N-linked (GlcNAc...) asparagine glycan is linked to Asn238. Residues Glu247 and His306 each coordinate Zn(2+). Residues 379–399 form a helical membrane-spanning segment; the sequence is FAISVALLVIAPLVIFITSVI. The Cytoplasmic portion of the chain corresponds to 400–433; it reads LSKTDRMYLFSMSKSLEGTGDQVSLRGLRGFSRT. The helical transmembrane segment at 434–454 threads the bilayer; it reads PIILVIATTIPICLAYLLEKV. Residues 455–463 are Vacuolar-facing; sequence NPYIVHSSQ. The chain crosses the membrane as a helical span at residues 464–484; sequence FSVWSMMFSAWIFLAWFLACA. Over 485–495 the chain is Cytoplasmic; the sequence is ADFFRPSALHR. The helical transmembrane segment at 496–516 threads the bilayer; sequence AYSYTWIFVATWIMLVINTVY. Residues 517–520 lie on the Vacuolar side of the membrane; the sequence is ANQK. A helical membrane pass occupies residues 521 to 541; it reads GIAAGYFLLFYFAGAFLATWI. At 542–659 the chain is on the cytoplasmic side; that stretch reads SYLELFALPR…TLPRWTWVLQ (118 aa). Residues 556 to 605 form a disordered region; it reads ARQTTGRRPSSLSSRLLTSSADELRSNASPSTAEFPGAAGEDTDPTESTS. Residues 559–575 show a composition bias toward low complexity; it reads TTGRRPSSLSSRLLTSS. Residues 660 to 680 form a helical membrane-spanning segment; that stretch reads LLLLAPIVLILVGQLALFLTA. At 681 to 693 the chain is on the vacuolar side; it reads SMCQVGSDGVSTF. Residues 694–714 traverse the membrane as a helical segment; the sequence is VVYLACAVFTTLLCIPLFPLI. The Cytoplasmic portion of the chain corresponds to 715 to 720; it reads HRFTYH. A helical membrane pass occupies residues 721–741; that stretch reads IPTFLFLVFIGTLIYNLVAFP. Topologically, residues 742 to 920 are vacuolar; that stretch reads FSPANRLKTF…VEASHSFTIQ (179 aa). 3 N-linked (GlcNAc...) asparagine glycosylation sites follow: Asn760, Asn788, and Asn832.

It belongs to the peptidase M28 family. Zn(2+) serves as cofactor.

It localises to the vacuole membrane. May be involved in vacuolar sorting and osmoregulation. The polypeptide is Vacuolar membrane protease (Ajellomyces capsulatus (strain H143) (Darling's disease fungus)).